The primary structure comprises 242 residues: 2-amino-5-formylamino-6-ribosylaminopyrimidin-4(3H)-one 5'-monophosphate deformylase (242 aa).

Glu-46, His-48, Asp-57, and His-125 together coordinate Fe cation.

The protein belongs to the creatininase superfamily. FAPy deformylase family. Homodimer. Fe(2+) serves as cofactor. The cofactor is Zn(2+).

It carries out the reaction 2-amino-5-formylamino-6-(5-phospho-D-ribosylamino)pyrimidin-4(3H)-one + H2O = 2,5-diamino-6-(1-D-ribosylamino)pyrimidin-4(3H)-one 5'-phosphate + formate + H(+). Its pathway is cofactor biosynthesis; coenzyme F420 biosynthesis. The protein operates within cofactor biosynthesis; riboflavin biosynthesis. Catalyzes the hydrolysis of the formamide of 2-amino-5-formylamino-6-ribosylamino-4(3H)-pyrimidinone 5'-monophosphate (FAPy) to form 2,5-diamino-6-ribosylamino-4(3H)-pyrimidinone 5'-phosphate (APy). This Methanococcus aeolicus (strain ATCC BAA-1280 / DSM 17508 / OCM 812 / Nankai-3) protein is 2-amino-5-formylamino-6-ribosylaminopyrimidin-4(3H)-one 5'-monophosphate deformylase.